The primary structure comprises 248 residues: Ubiquinone/menaquinone biosynthesis C-methyltransferase UbiE (248 aa).

The S-adenosyl-L-methionine site is built by serine 68 and aspartate 92.

Belongs to the class I-like SAM-binding methyltransferase superfamily. MenG/UbiE family.

The catalysed reaction is a 2-demethylmenaquinol + S-adenosyl-L-methionine = a menaquinol + S-adenosyl-L-homocysteine + H(+). It catalyses the reaction a 2-methoxy-6-(all-trans-polyprenyl)benzene-1,4-diol + S-adenosyl-L-methionine = a 5-methoxy-2-methyl-3-(all-trans-polyprenyl)benzene-1,4-diol + S-adenosyl-L-homocysteine + H(+). Its pathway is quinol/quinone metabolism; menaquinone biosynthesis; menaquinol from 1,4-dihydroxy-2-naphthoate: step 2/2. The protein operates within cofactor biosynthesis; ubiquinone biosynthesis. Methyltransferase required for the conversion of demethylmenaquinol (DMKH2) to menaquinol (MKH2) and the conversion of 2-polyprenyl-6-methoxy-1,4-benzoquinol (DDMQH2) to 2-polyprenyl-3-methyl-6-methoxy-1,4-benzoquinol (DMQH2). The polypeptide is Ubiquinone/menaquinone biosynthesis C-methyltransferase UbiE (Rickettsia felis (strain ATCC VR-1525 / URRWXCal2) (Rickettsia azadi)).